Consider the following 35-residue polypeptide: ACLGFGEKCNPSNDKCCKSSSLVCSQKHKWCKYDL.

Disulfide bonds link Cys2–Cys17, Cys9–Cys24, and Cys16–Cys31.

Belongs to the neurotoxin 10 (Hwtx-1) family. 10 (haplotoxin-1) subfamily. In terms of tissue distribution, expressed by the venom gland.

It is found in the secreted. Functionally, potently inhibits Nav1.7/SCN9A (IC(50)=98.1 nM), and moderately inhibits Nav1.2/SCN2A (IC(50)=216.3 nM), Nav1.6/SCN8A (IC(50)=313.6 nM), and Nav1.3/SCN3A (IC(50)=491.3 nM). Hyperpolarizes the slow inactivation, but does not alter the voltage-dependent activation or fast inactivation of Nav1.7/SCN9A. Binds with Nav1.7/SCN9A at the extracellular S3-S4 linker of domain II (site 4). In vivo, exhibits dose-dependent analgesic efficacy by reducing pain responses in rodent models of formalin-induced paw licking, hot plate test, and acetic acid-induced writhing. This Cyriopagopus albostriatus (Cambodian tiger tarantula) protein is Mu-theraphotoxin-Ca2a.